A 362-amino-acid polypeptide reads, in one-letter code: UDP-N-acetylglucosamine--N-acetylmuramyl-(pentapeptide) pyrophosphoryl-undecaprenol N-acetylglucosamine transferase (362 aa).

UDP-N-acetyl-alpha-D-glucosamine is bound by residues 15–17 (TGG), asparagine 127, arginine 165, serine 191, isoleucine 247, 266–271 (ALTVSE), and glutamine 292.

It belongs to the glycosyltransferase 28 family. MurG subfamily.

It is found in the cell inner membrane. It carries out the reaction di-trans,octa-cis-undecaprenyl diphospho-N-acetyl-alpha-D-muramoyl-L-alanyl-D-glutamyl-meso-2,6-diaminopimeloyl-D-alanyl-D-alanine + UDP-N-acetyl-alpha-D-glucosamine = di-trans,octa-cis-undecaprenyl diphospho-[N-acetyl-alpha-D-glucosaminyl-(1-&gt;4)]-N-acetyl-alpha-D-muramoyl-L-alanyl-D-glutamyl-meso-2,6-diaminopimeloyl-D-alanyl-D-alanine + UDP + H(+). Its pathway is cell wall biogenesis; peptidoglycan biosynthesis. In terms of biological role, cell wall formation. Catalyzes the transfer of a GlcNAc subunit on undecaprenyl-pyrophosphoryl-MurNAc-pentapeptide (lipid intermediate I) to form undecaprenyl-pyrophosphoryl-MurNAc-(pentapeptide)GlcNAc (lipid intermediate II). This chain is UDP-N-acetylglucosamine--N-acetylmuramyl-(pentapeptide) pyrophosphoryl-undecaprenol N-acetylglucosamine transferase, found in Shewanella sp. (strain ANA-3).